The primary structure comprises 301 residues: Transcriptional activator FeaR (301 aa).

Positions 199–299 (QKVVTLIDDN…GMTPGEYRRK (101 aa)) constitute an HTH araC/xylS-type domain. 2 consecutive DNA-binding regions (H-T-H motif) follow at residues 217-238 (EWIA…ADKG) and 266-289 (LAGI…KQRF).

Its function is as follows. Positive regulator of tynA/maoA and feaB/padA, the genes for 2-phenylethylamine catabolism. The sequence is that of Transcriptional activator FeaR (feaR) from Escherichia coli (strain K12).